The chain runs to 517 residues: Crotonobetaine/carnitine--CoA ligase (517 aa).

Belongs to the ATP-dependent AMP-binding enzyme family.

The catalysed reaction is 4-(trimethylamino)butanoate + ATP + CoA = 4-(trimethylamino)butanoyl-CoA + AMP + diphosphate. It carries out the reaction crotonobetaine + ATP + CoA = crotonobetainyl-CoA + AMP + diphosphate. The enzyme catalyses (R)-carnitine + ATP + CoA = (R)-carnitinyl-CoA + AMP + diphosphate. The protein operates within amine and polyamine metabolism; carnitine metabolism. Catalyzes the transfer of CoA to carnitine, generating the initial carnitinyl-CoA needed for the CaiB reaction cycle. Also has activity toward crotonobetaine and gamma-butyrobetaine. This Salmonella choleraesuis (strain SC-B67) protein is Crotonobetaine/carnitine--CoA ligase.